Consider the following 165-residue polypeptide: ER membrane protein complex subunit 5 (165 aa).

The Cytoplasmic portion of the chain corresponds to 1–3 (MAP). The helical transmembrane segment at 4-22 (SLWKGLVGIGLFALAHAAF) threads the bilayer. At 23 to 77 (SAAQHYFPSSGIKWKRKCEFLQSSSFQDKIFRSMYYVYDRSYMRLTEKEDESLPI) the chain is on the lumenal side. A helical membrane pass occupies residues 78–97 (DIVLQTLLAFAVTCYGIVHI). Topologically, residues 98–165 (AGEFKDMDAT…KLRKLESLRR (68 aa)) are cytoplasmic. At S154 the chain carries Phosphoserine.

The protein belongs to the membrane magnesium transporter (TC 1.A.67) family. Component of the ER membrane protein complex (EMC).

The protein resides in the endoplasmic reticulum membrane. Its subcellular location is the golgi apparatus membrane. It is found in the early endosome membrane. Its function is as follows. Part of the endoplasmic reticulum membrane protein complex (EMC) that enables the energy-independent insertion into endoplasmic reticulum membranes of newly synthesized membrane proteins. Preferentially accommodates proteins with transmembrane domains that are weakly hydrophobic or contain destabilizing features such as charged and aromatic residues. Involved in the cotranslational insertion of multi-pass membrane proteins in which stop-transfer membrane-anchor sequences become ER membrane spanning helices. It is also required for the post-translational insertion of tail-anchored/TA proteins in endoplasmic reticulum membranes. By mediating the proper cotranslational insertion of N-terminal transmembrane domains in an N-exo topology, with translocated N-terminus in the lumen of the ER, controls the topology of multi-pass membrane proteins like the G protein-coupled receptors. By regulating the insertion of various proteins in membranes, it is indirectly involved in many cellular processes. May be involved in Mg(2+) transport. The sequence is that of ER membrane protein complex subunit 5 from Bos taurus (Bovine).